The chain runs to 1180 residues: Nonsense-mediated mRNA decay factor SMG7 (1180 aa).

TPR repeat units follow at residues 151-184 and 186-218; these read QHCL…VPSN and QPYN…KFPF. Disordered stretches follow at residues 496-636, 692-795, 893-913, 1019-1127, and 1148-1180; these read PQEK…TQTT, QTAS…SYMQ, CSDQ…SSPL, SLFE…WAAQ, and SSMM…NPPH. Polar residues predominate over residues 504–520; the sequence is LQESSNGEQTPNESTHG. 3 stretches are compositionally biased toward basic and acidic residues: residues 547-559, 584-606, and 615-627; these read ENIK…REQN, NEQK…KTTD, and TELR…EARK. The segment covering 692 to 718 has biased composition (polar residues); that stretch reads QTASHPQSANPVQTGKPSHIPYSQQRP. Residues 728 to 740 are compositionally biased toward pro residues; it reads PPQPQQTQPPPPQ. The segment covering 741-778 has biased composition (low complexity); it reads TSQQALQQSVQLQLQQQQQQQQQQQQQQQQSPTKQSSQ. Residues 1026–1038 show a composition bias toward polar residues; the sequence is WSPSLPASSDHST. Over residues 1039-1065 the composition is skewed to low complexity; that stretch reads PASQSPHSSNPSSLPSSPPTHSHGSMP. Positions 1076–1090 are enriched in basic and acidic residues; sequence DSRDRRANDRWKAEK. Over residues 1103–1125 the composition is skewed to polar residues; sequence SASTSSVPETNSWHQGAPTSTWA.

The protein resides in the cytoplasm. The protein localises to the nucleus. In terms of biological role, plays a role in nonsense-mediated mRNA decay. Recruits UPF1 to cytoplasmic mRNA decay bodies. Together with SMG5 is thought to provide a link to the mRNA degradation machinery involving exonucleolytic pathways, and to serve as an adapter for UPF1 to protein phosphatase 2A (PP2A), thereby triggering UPF1 dephosphorylation. Required for normal embryonic development. The polypeptide is Nonsense-mediated mRNA decay factor SMG7 (Danio rerio (Zebrafish)).